The sequence spans 130 residues: Small ribosomal subunit protein uS8 (130 aa).

Belongs to the universal ribosomal protein uS8 family. In terms of assembly, part of the 30S ribosomal subunit. Contacts proteins S5 and S12.

Its function is as follows. One of the primary rRNA binding proteins, it binds directly to 16S rRNA central domain where it helps coordinate assembly of the platform of the 30S subunit. This is Small ribosomal subunit protein uS8 from Pseudomonas fluorescens (strain SBW25).